We begin with the raw amino-acid sequence, 725 residues long: Lipoamidase (725 aa).

Positions 1–52 (MLAQESILETTVQTETESVTTETSQTVANLESETTSQTVMQEKESSSAIAES) are disordered. Residues 9-27 (ETTVQTETESVTTETSQTV) are compositionally biased toward low complexity. The span at 28 to 40 (ANLESETTSQTVM) shows a compositional bias: polar residues. Active-site charge relay system residues include K159 and S235. S259 functions as the Acyl-ester intermediate in the catalytic mechanism. The segment at 551 to 686 (KINQPHVEEP…NKSMIGKQEQ (136 aa)) is disordered. Over residues 556-637 (HVEEPDKDKE…TSEGPIEGKD (82 aa)) the composition is skewed to basic and acidic residues. The span at 650 to 661 (SGSSLDNSLNSS) shows a compositional bias: low complexity. The segment covering 662–679 (ANQGTKSTESTHAFSNKS) has biased composition (polar residues). Residues 700-720 (PSTFWIVLGGAFLVTSGTIYI) form a helical membrane-spanning segment.

Belongs to the amidase family. As to quaternary structure, homodimer in solution.

It localises to the cell membrane. It catalyses the reaction N(6)-[(R)-lipoyl]-L-lysyl-[lipoyl-carrier protein] + H2O = L-lysyl-[lipoyl-carrier protein] + (R)-lipoate. Lipoamidase activity is slightly inhibited by p-chloromercuribenzoate. Amidohydrolase that releases lipoic acid from the protein-bound form. Cleaves the amide bond that links lipoic acid to the lipoylated lysine epsilon-amino groups, leading to the formation of free lipoic acid plus the unmodified protein. Shows activity toward both high molecular weight protein substrates such as a lipoyl domain and intact 2-oxoacid dehydrogenases as well as small molecule substrates such as lipoyl-lysine. Also acts on small biotinylated substrates. Hydrolyzes the synthetic substrates methyl lipoate and lipoamide. The physiologically important substrates are probably lipoyl-lysine and small peptides containing lipoyl-lysine. Lpa seems likely to enable this bacterium to utilize amide-linked forms of lipoic acid that otherwise could not be assimilated. The polypeptide is Lipoamidase (Enterococcus faecalis (Streptococcus faecalis)).